A 122-amino-acid chain; its full sequence is Large ribosomal subunit protein uL14 (122 aa).

The protein belongs to the universal ribosomal protein uL14 family. As to quaternary structure, part of the 50S ribosomal subunit. Forms a cluster with proteins L3 and L19. In the 70S ribosome, L14 and L19 interact and together make contacts with the 16S rRNA in bridges B5 and B8.

Binds to 23S rRNA. Forms part of two intersubunit bridges in the 70S ribosome. This Thermomicrobium roseum (strain ATCC 27502 / DSM 5159 / P-2) protein is Large ribosomal subunit protein uL14.